The following is a 315-amino-acid chain: Ribonuclease Z (315 aa).

7 residues coordinate Zn(2+): His61, His63, Asp65, His66, His151, Asp219, and His278. The active-site Proton acceptor is Asp65.

The protein belongs to the RNase Z family. As to quaternary structure, homodimer. It depends on Zn(2+) as a cofactor.

It carries out the reaction Endonucleolytic cleavage of RNA, removing extra 3' nucleotides from tRNA precursor, generating 3' termini of tRNAs. A 3'-hydroxy group is left at the tRNA terminus and a 5'-phosphoryl group is left at the trailer molecule.. Its function is as follows. Zinc phosphodiesterase, which displays some tRNA 3'-processing endonuclease activity. Probably involved in tRNA maturation, by removing a 3'-trailer from precursor tRNA. This is Ribonuclease Z from Clostridium botulinum (strain Alaska E43 / Type E3).